The primary structure comprises 355 residues: UDP-N-acetylglucosamine--N-acetylmuramyl-(pentapeptide) pyrophosphoryl-undecaprenol N-acetylglucosamine transferase (355 aa).

Residues 15 to 17 (TGG), N127, R163, S191, I244, 263 to 268 (ALTVSE), and Q288 each bind UDP-N-acetyl-alpha-D-glucosamine.

This sequence belongs to the glycosyltransferase 28 family. MurG subfamily.

Its subcellular location is the cell inner membrane. The catalysed reaction is di-trans,octa-cis-undecaprenyl diphospho-N-acetyl-alpha-D-muramoyl-L-alanyl-D-glutamyl-meso-2,6-diaminopimeloyl-D-alanyl-D-alanine + UDP-N-acetyl-alpha-D-glucosamine = di-trans,octa-cis-undecaprenyl diphospho-[N-acetyl-alpha-D-glucosaminyl-(1-&gt;4)]-N-acetyl-alpha-D-muramoyl-L-alanyl-D-glutamyl-meso-2,6-diaminopimeloyl-D-alanyl-D-alanine + UDP + H(+). Its pathway is cell wall biogenesis; peptidoglycan biosynthesis. Its function is as follows. Cell wall formation. Catalyzes the transfer of a GlcNAc subunit on undecaprenyl-pyrophosphoryl-MurNAc-pentapeptide (lipid intermediate I) to form undecaprenyl-pyrophosphoryl-MurNAc-(pentapeptide)GlcNAc (lipid intermediate II). This is UDP-N-acetylglucosamine--N-acetylmuramyl-(pentapeptide) pyrophosphoryl-undecaprenol N-acetylglucosamine transferase from Escherichia coli O127:H6 (strain E2348/69 / EPEC).